The primary structure comprises 193 residues: Ion-translocating oxidoreductase complex subunit B (193 aa).

A hydrophobic region spans residues methionine 1–alanine 26. The 4Fe-4S domain occupies glutamate 32–valine 90. [4Fe-4S] cluster is bound by residues cysteine 49, cysteine 52, cysteine 57, cysteine 73, cysteine 114, cysteine 117, cysteine 120, cysteine 124, cysteine 144, cysteine 147, cysteine 150, and cysteine 154. 2 4Fe-4S ferredoxin-type domains span residues lysine 105–lysine 134 and methionine 136–valine 164.

This sequence belongs to the 4Fe4S bacterial-type ferredoxin family. RnfB subfamily. As to quaternary structure, the complex is composed of six subunits: RnfA, RnfB, RnfC, RnfD, RnfE and RnfG. The cofactor is [4Fe-4S] cluster.

Its subcellular location is the cell inner membrane. Part of a membrane-bound complex that couples electron transfer with translocation of ions across the membrane. The sequence is that of Ion-translocating oxidoreductase complex subunit B from Shewanella sp. (strain ANA-3).